The primary structure comprises 455 residues: Nuclear mRNA export protein THP1 (455 aa).

Residues 220 to 431 enclose the PCI domain; sequence IEYRYLLGRY…QLCVVKKTTM (212 aa).

As to quaternary structure, heterodimer with THP1. The SAC3-THP1 complex interacts with CDC31 and SUS1, and with the mRNA export factor MEX67-MTR2, the TREX complex component SUB2, and the nucleoporin NUP1.

It localises to the nucleus envelope. Its function is as follows. Component of the SAC3-THP1 complex, which functions in transcription-coupled mRNA export from the nucleus to the cytoplasm. SAC3-THP1 functions in docking export-competent ribonucleoprotein particles (mRNPs) to the nuclear entrance of the nuclear pore complex (nuclear basket), by association with components of the nuclear mRNA export machinery (MEX67-MTR2 and SUB2) in the nucleoplasm and the nucleoporin NUP1 at the nuclear basket. THP1 binds to RNA in vitro. This Saccharomyces cerevisiae (strain ATCC 204508 / S288c) (Baker's yeast) protein is Nuclear mRNA export protein THP1 (THP1).